A 360-amino-acid polypeptide reads, in one-letter code: Peptide chain release factor 1 (360 aa).

Gln235 is subject to N5-methylglutamine. Residues 284–293 show a composition bias toward basic and acidic residues; sequence QRRQQEESST. Residues 284–311 are disordered; sequence QRRQQEESSTRRNLLGSGDRSDRIRTYN.

This sequence belongs to the prokaryotic/mitochondrial release factor family. Methylated by PrmC. Methylation increases the termination efficiency of RF1.

It localises to the cytoplasm. Its function is as follows. Peptide chain release factor 1 directs the termination of translation in response to the peptide chain termination codons UAG and UAA. In Sodalis glossinidius (strain morsitans), this protein is Peptide chain release factor 1.